The chain runs to 288 residues: uncharacterized protein (288 aa).

A compositionally biased stretch (basic and acidic residues) spans 1–12 (MTEGRCAQHPDG). The segment at 1 to 20 (MTEGRCAQHPDGLDVQDVCD) is disordered.

It belongs to the class IV-like SAM-binding methyltransferase superfamily. RNA methyltransferase TrmH family.

This is an uncharacterized protein from Mycobacterium tuberculosis (strain ATCC 25618 / H37Rv).